The chain runs to 150 residues: UPF0756 membrane protein HAPS_1649 (150 aa).

5 consecutive transmembrane segments (helical) span residues 1-21, 27-46, 52-72, 82-102, and 123-143; these read MSLQ…LGIF, VTIS…SKYV, YGIK…LVSG, LINW…WLGG, and IIGV…AGIL.

The protein belongs to the UPF0756 family.

It localises to the cell membrane. The polypeptide is UPF0756 membrane protein HAPS_1649 (Glaesserella parasuis serovar 5 (strain SH0165) (Haemophilus parasuis)).